Here is a 316-residue protein sequence, read N- to C-terminus: Bifunctional peptidase and (3S)-lysyl hydroxylase JMJD7 (316 aa).

Cys-19 is subject to Cysteine sulfenic acid (-SOH). Tyr-123 and Thr-172 together coordinate 2-oxoglutarate. Tyr-123 serves as a coordination point for succinate. The region spanning 124–310 (IQKQNSNLSV…YCYYRMLEQM (187 aa)) is the JmjC domain. 2 residues coordinate Fe cation: His-175 and Asp-177. The 2-oxoglutarate site is built by Asn-181, Tyr-183, and Lys-190. Succinate contacts are provided by Tyr-183 and Lys-190. His-278 contributes to the Fe cation binding site. Trp-292 contacts 2-oxoglutarate.

As to quaternary structure, homodimer; disulfide-linked. Requires Fe(2+) as cofactor. Expressed in the pars intercerebralis and fan-shaped body, regions known to be involved in sleep.

The protein localises to the nucleus. It is found in the cytoplasm. It catalyses the reaction L-lysyl-[protein] + 2-oxoglutarate + O2 = (3S)-3-hydroxy-L-lysyl-[protein] + succinate + CO2. Functionally, bifunctional enzyme that acts both as an endopeptidase and 2-oxoglutarate-dependent monooxygenase. Endopeptidase that cleaves histones N-terminal tails at the carboxyl side of methylated arginine or lysine residues, to generate 'tailless nucleosomes', which may trigger transcription elongation. Hydroxylates the guanylate binding protein 128up. May be involved in regulation of behavior and circadian rhythms. The protein is Bifunctional peptidase and (3S)-lysyl hydroxylase JMJD7 of Drosophila melanogaster (Fruit fly).